The sequence spans 228 residues: RNA chaperone ProQ (228 aa).

The tract at residues 105-178 (EAKARVQAQR…REEQHTPVSD (74 aa)) is disordered. 2 stretches are compositionally biased toward basic and acidic residues: residues 117 to 136 (QQAK…DAPR) and 146 to 173 (RRKE…EEQH).

Belongs to the ProQ family.

It is found in the cytoplasm. Functionally, RNA chaperone with significant RNA binding, RNA strand exchange and RNA duplexing activities. May regulate ProP activity through an RNA-based, post-transcriptional mechanism. The protein is RNA chaperone ProQ of Citrobacter koseri (strain ATCC BAA-895 / CDC 4225-83 / SGSC4696).